Here is a 288-residue protein sequence, read N- to C-terminus: ATP phosphoribosyltransferase (288 aa).

This sequence belongs to the ATP phosphoribosyltransferase family. Long subfamily. Mg(2+) is required as a cofactor.

The protein localises to the cytoplasm. The catalysed reaction is 1-(5-phospho-beta-D-ribosyl)-ATP + diphosphate = 5-phospho-alpha-D-ribose 1-diphosphate + ATP. The protein operates within amino-acid biosynthesis; L-histidine biosynthesis; L-histidine from 5-phospho-alpha-D-ribose 1-diphosphate: step 1/9. With respect to regulation, feedback inhibited by histidine. Catalyzes the condensation of ATP and 5-phosphoribose 1-diphosphate to form N'-(5'-phosphoribosyl)-ATP (PR-ATP). Has a crucial role in the pathway because the rate of histidine biosynthesis seems to be controlled primarily by regulation of HisG enzymatic activity. This is ATP phosphoribosyltransferase from Methanococcus maripaludis (strain C7 / ATCC BAA-1331).